Reading from the N-terminus, the 314-residue chain is uncharacterized protein (314 aa).

Residues threonine 192–leucine 289 form the HTH araC/xylS-type domain. DNA-binding regions (H-T-H motif) lie at residues threonine 209–leucine 230 and isoleucine 257–isoleucine 279.

This is an uncharacterized protein from Bacillus subtilis (strain 168).